The primary structure comprises 203 residues: NAD(P)H dehydrogenase (quinone) (203 aa).

Residues 3–194 (VLIPFYSMYG…AGARYQGKYI (192 aa)) enclose the Flavodoxin-like domain. FMN-binding positions include 9–14 (SMYGHI) and 82–84 (TRF). Residue Tyr11 participates in NAD(+) binding. Trp102 contributes to the substrate binding site. Residues 117-123 (SSATQHG) and His138 each bind FMN.

This sequence belongs to the WrbA family. FMN is required as a cofactor.

It catalyses the reaction a quinone + NADH + H(+) = a quinol + NAD(+). It carries out the reaction a quinone + NADPH + H(+) = a quinol + NADP(+). In Geobacter metallireducens (strain ATCC 53774 / DSM 7210 / GS-15), this protein is NAD(P)H dehydrogenase (quinone).